A 7214-amino-acid chain; its full sequence is Nonribosomal peptide synthetase atnA (7214 aa).

Residues 257–651 (ERKALEQPHA…VGRKDTQVKI (395 aa)) are adenylation 1. A Carrier 1 domain is found at 786–862 (EPVTETEKAV…AMSQIAVELS (77 aa)). Residue S823 is modified to O-(pantetheine 4'-phosphoryl)serine. Residues 899–1318 (EDAYPATALQ…LVSQKDYTQI (420 aa)) form a condensation 1 region. Residues 1340–1735 (QVLATPDAPA…ARKDTQAKVR (396 aa)) form an adenylation 2 region. One can recognise a Carrier 2 domain in the interval 1877-1953 (QPTSDIEKKV…ALAGRAQYIE (77 aa)). O-(pantetheine 4'-phosphoryl)serine is present on S1914. Residues 1962 to 2384 (PEAEVIDEWF…RQVLETGIDE (423 aa)) are epimerization. A condensation 2 region spans residues 2431–2845 (SPCSPMQLGL…MLSPLDRASL (415 aa)). Residues 2866-3262 (QNARKRPHAL…VGRKDTQVKV (397 aa)) are adenylation 3. Positions 3398-3472 (ALETPMEETI…DMARIVVAAY (75 aa)) constitute a Carrier 3 domain. Position 3433 is an O-(pantetheine 4'-phosphoryl)serine (S3433). The tract at residues 3510-3904 (VEDVYPSTSL…QLCENEDGRL (395 aa)) is condensation 3. Residues 3943–4339 (ERARLHPDLL…VGRKDSQVKL (397 aa)) form an adenylation 4 region. The Carrier 4 domain occupies 4476–4552 (VPGSEAEKVI…ELAGRVTSIS (77 aa)). S4513 carries the O-(pantetheine 4'-phosphoryl)serine modification. A condensation 4 region spans residues 4601–5033 (VEDVYPCSPL…TSAAMRAQLL (433 aa)). An adenylation 5 region spans residues 5051 to 5446 (FHRTALRYPE…VGRKDTQIKF (396 aa)). Residues 5489–5515 (FITTEGGSGHENKGSPSLKGSSGDPVS) are disordered. In terms of domain architecture, Carrier 5 spans 5591-5667 (APRTAMEKRL…QMANIVARNA (77 aa)). Residue S5628 is modified to O-(pantetheine 4'-phosphoryl)serine. Residues 5707 to 6123 (QDVYPCTPLQ…HLLGDNEIKM (417 aa)) are condensation 5. The interval 6145–6543 (ERAVLQPEAI…GRKDTQIKLR (399 aa)) is adenylation 6. Positions 6683–6766 (DPADKLALAL…DVARMIEHGN (84 aa)) constitute a Carrier 6 domain. At S6725 the chain carries O-(pantetheine 4'-phosphoryl)serine. Residues 6814–7194 (ILLTGATGFL…KSISYMRQIG (381 aa)) are thioesterase (TE) domain. The segment at 6895–6915 (STVEGRDHPGSESGSTAGPAE) is disordered.

The protein belongs to the NRP synthetase family.

It participates in secondary metabolite biosynthesis. In terms of biological role, nonribosomal peptide synthetase; part of the gene cluster that mediates the biosynthesis of aspercryptins, linear lipopeptides built from six amino acids including 2 highly unusual and nonproteogenic amino acids, 2-amino-octanoic acid (2aoa) and 2-amino-dodecanol (2adol). The core structure of aspercryptins is as follows: Ser/Ala-Thr-Ile/Val-2aoa-Asn-2adol. The first step of aspercryptin biosynthesis is the generation of the fatty acid precursors, octanoic and dodecanoic acids, by the FAS subunits atnF and atnM. The fatty acid precursors are likely transformed into the corresponding alpha-amino fatty acids in three steps. First, they are hydroxylated by the cytochrome P450 monooxygenase atnE, then oxidized to the corresponding alpha-keto acids by the NAD(P)-dependent oxidoreductase atnD, and finally converted to the alpha-amino fatty acids by the PLP-dependent aminotransferases atnH or atnJ. the alpha-amino fatty acids, 2-amino-octanoic and 2-amino-dodecanoic acids, are recognized, activated, and covalently tethered to the NRPS atnA by its fourth and sixth adenylation domains. The second module of atnA is the Thr module and contains an epimerase (E) domain responsible for the epimerization of Thr to D-allo-Thr. Additionally, despite atnA having only one epimerase domain, the first amino acid of aspercryptin A1 is D-Ser, suggesting that serine is either loaded directly as D-Ser on the first module or that the epimerase domain in the threonine module epimerizes both L-Ser and L-Thr. After condensation of the hexapeptide of aspercryptin, the C-terminal reductase (TE) domain might be involved in the reductive release and production of the aldehyde hexapeptide. Further reduction would generate aspercryptins. The variety of aspercryptins produced reflects the flexibility of the atnA NRPS, allowing incorporation of alanine instead of serine, valine for isoleucine, and a C10 fatty amino alcohol instead of the C12 version. AtnB seems to be involved in the selectivity for Ile versus Val by the third module. Moreover, type B, C and D aspercryptins have an additional N-terminal cichorine, acetyl and propionyl group respectively. This chain is Nonribosomal peptide synthetase atnA, found in Emericella nidulans (strain FGSC A4 / ATCC 38163 / CBS 112.46 / NRRL 194 / M139) (Aspergillus nidulans).